A 473-amino-acid chain; its full sequence is Presenilin-B (473 aa).

The interval 1–141 (MSSDNNNDPF…PLLNKKEKDD (141 aa)) is disordered. Topologically, residues 1–164 (MSSDNNNDPF…DDEVSLQDFS (164 aa)) are cytoplasmic. The segment covering 22-46 (RVSTTTSPNRQSINSSPKQSSPKST) has biased composition (polar residues). Residues 54–72 (NIILDLNDNNNDNNNTNNY) show a composition bias toward low complexity. The segment covering 79–89 (VDNKNKFENKD) has biased composition (basic and acidic residues). The helical transmembrane segment at 165–185 (SMIVSIIIPVSITMMAVVFFV) threads the bilayer. Residues 186-224 (KYLNNQTLYASTLSYTIAGGSSGGGSGADSITGNSFVDS) are Lumenal-facing. The N-linked (GlcNAc...) asparagine glycan is linked to asparagine 190. Residues 225 to 245 (LIVAGIVLGMIIVTTVAFVLL) traverse the membrane as a helical segment. The Cytoplasmic portion of the chain corresponds to 246–252 (YKYRCLK). The helical transmembrane segment at 253-273 (ILYGWLFLSVGMMLGSFGTTF) threads the bilayer. Residues 274-286 (FQAMLSAANLPLD) are Lumenal-facing. A helical membrane pass occupies residues 287–307 (YITFAFLIFNFTVCGIIGVFW). Position 308 (tyrosine 308) is a topological domain, cytoplasmic. Residues 309–329 (AHQYVNQLYLVIISVLMAISL) traverse the membrane as a helical segment. The Lumenal portion of the chain corresponds to 330–334 (TRLPQ). The helical transmembrane segment at 335 to 355 (WTIFTLLVIVAIYDLFAVLCP) threads the bilayer. Aspartate 348 is a catalytic residue. Topologically, residues 356–389 (RGPLKVLVELSQERNENIPALVYETGKGSDSNLK) are cytoplasmic. A helical transmembrane segment spans residues 390-410 (LGLGDFIFYSLLISRAALVHM). Aspartate 394 is an active-site residue. Over 411 to 413 (SCV) the chain is Lumenal. A helical transmembrane segment spans residues 414–434 (FSTFIAILTGLFLTLLCLAIF). The Cytoplasmic portion of the chain corresponds to 435–442 (KKALPALP). The PAL signature appears at 439 to 441 (PAL). Positions 443–463 (ISIFLGILFYYLSNNFLTPFI) form an intramembrane region, helical. At 464–473 (EALTLSQIFV) the chain is on the cytoplasmic side.

It belongs to the peptidase A22A family. In terms of assembly, homodimer. Component of the gamma-secretase complex, a complex composed of a presenilin homodimer, nicastrin, aph1 and pen2.

The protein resides in the endoplasmic reticulum membrane. It localises to the golgi apparatus membrane. Its function is as follows. Probable catalytic subunit of the gamma-secretase complex, an endoprotease complex that catalyzes the intramembrane cleavage of integral membrane proteins such as Notch receptors. Requires the other members of the gamma-secretase complex to have a protease activity. This is Presenilin-B (psenB) from Dictyostelium discoideum (Social amoeba).